The sequence spans 290 residues: MVIQKEKKSCGQVVEEWKEFVWNPRTHQFMGRTGTSWAFILLFYLVFYGFLTAMFTLTMWVMLQTVSDHTPKYQDRLATPGLMIRPKTENLDVIVNISDTESWDQHVQKLNKFLEPYNDSIQAQKNDVCRPGRYYEQPDNGVLNYPKRACQFNRTQLGNCSGIGDPTHYGYSTGQPCVFIKMNRVINFYAGANQSMNVTCVGKKDEDAENLGHFIMFPANGNIDLMYFPYYGKKFHVNYTQPLVAVKFLNVTPNVEVNVECRINAANIATDDERDKFAARVAFKLRINKA.

Over methionine 1–phenylalanine 39 the chain is Cytoplasmic. The chain crosses the membrane as a helical; Signal-anchor for type II membrane protein span at residues isoleucine 40 to serine 67. Topologically, residues aspartate 68 to alanine 290 are extracellular. Residues asparagine 96 and asparagine 118 are each glycosylated (N-linked (GlcNAc...) asparagine). Residues cysteine 129 and cysteine 150 are joined by a disulfide bond. N-linked (GlcNAc...) asparagine glycans are attached at residues asparagine 153 and asparagine 159. Cysteine 160 and cysteine 177 are joined by a disulfide. N-linked (GlcNAc...) asparagine glycans are attached at residues asparagine 193, asparagine 197, and asparagine 238. Residues asparagine 193–alanine 290 form an immunoglobulin-like region. A disulfide bridge connects residues cysteine 200 and cysteine 261.

It belongs to the X(+)/potassium ATPases subunit beta family. As to quaternary structure, the sodium/potassium-transporting ATPase is composed of a catalytic alpha subunit, an auxiliary non-catalytic beta subunit and an additional regulatory subunit. Interacts with isoform 2 of BSG. Highly expressed in brain (at protein level).

The protein resides in the cell membrane. This is the non-catalytic component of the active enzyme, which catalyzes the hydrolysis of ATP coupled with the exchange of Na(+) and K(+) ions across the plasma membrane. The exact function of the beta-2 subunit is not known. In terms of biological role, mediates cell adhesion of neurons and astrocytes, and promotes neurite outgrowth. The chain is Sodium/potassium-transporting ATPase subunit beta-2 (Atp1b2) from Rattus norvegicus (Rat).